The following is a 159-amino-acid chain: SsrA-binding protein (159 aa).

It belongs to the SmpB family.

It is found in the cytoplasm. Functionally, required for rescue of stalled ribosomes mediated by trans-translation. Binds to transfer-messenger RNA (tmRNA), required for stable association of tmRNA with ribosomes. tmRNA and SmpB together mimic tRNA shape, replacing the anticodon stem-loop with SmpB. tmRNA is encoded by the ssrA gene; the 2 termini fold to resemble tRNA(Ala) and it encodes a 'tag peptide', a short internal open reading frame. During trans-translation Ala-aminoacylated tmRNA acts like a tRNA, entering the A-site of stalled ribosomes, displacing the stalled mRNA. The ribosome then switches to translate the ORF on the tmRNA; the nascent peptide is terminated with the 'tag peptide' encoded by the tmRNA and targeted for degradation. The ribosome is freed to recommence translation, which seems to be the essential function of trans-translation. The chain is SsrA-binding protein from Dichelobacter nodosus (strain VCS1703A).